A 638-amino-acid chain; its full sequence is 1-deoxy-D-xylulose-5-phosphate synthase (638 aa).

Thiamine diphosphate is bound by residues histidine 79 and 120–122 (GHS). Residue aspartate 151 participates in Mg(2+) binding. Thiamine diphosphate contacts are provided by residues 152–153 (GA), asparagine 182, tyrosine 291, and glutamate 373. Mg(2+) is bound at residue asparagine 182.

It belongs to the transketolase family. DXPS subfamily. As to quaternary structure, homodimer. The cofactor is Mg(2+). Thiamine diphosphate serves as cofactor.

It catalyses the reaction D-glyceraldehyde 3-phosphate + pyruvate + H(+) = 1-deoxy-D-xylulose 5-phosphate + CO2. The protein operates within metabolic intermediate biosynthesis; 1-deoxy-D-xylulose 5-phosphate biosynthesis; 1-deoxy-D-xylulose 5-phosphate from D-glyceraldehyde 3-phosphate and pyruvate: step 1/1. Its function is as follows. Catalyzes the acyloin condensation reaction between C atoms 2 and 3 of pyruvate and glyceraldehyde 3-phosphate to yield 1-deoxy-D-xylulose-5-phosphate (DXP). The chain is 1-deoxy-D-xylulose-5-phosphate synthase from Xanthomonas campestris pv. campestris (strain 8004).